A 312-amino-acid chain; its full sequence is Formimidoylglutamase (312 aa).

Residues histidine 128, aspartate 153, histidine 155, aspartate 157, aspartate 240, and aspartate 242 each contribute to the Mn(2+) site.

This sequence belongs to the arginase family. It depends on Mn(2+) as a cofactor.

The enzyme catalyses N-formimidoyl-L-glutamate + H2O = formamide + L-glutamate. The protein operates within amino-acid degradation; L-histidine degradation into L-glutamate; L-glutamate from N-formimidoyl-L-glutamate (hydrolase route): step 1/1. In terms of biological role, catalyzes the conversion of N-formimidoyl-L-glutamate to L-glutamate and formamide. The protein is Formimidoylglutamase of Enterobacter sp. (strain 638).